The following is a 151-amino-acid chain: SsrA-binding protein (151 aa).

This sequence belongs to the SmpB family.

The protein resides in the cytoplasm. Required for rescue of stalled ribosomes mediated by trans-translation. Binds to transfer-messenger RNA (tmRNA), required for stable association of tmRNA with ribosomes. tmRNA and SmpB together mimic tRNA shape, replacing the anticodon stem-loop with SmpB. tmRNA is encoded by the ssrA gene; the 2 termini fold to resemble tRNA(Ala) and it encodes a 'tag peptide', a short internal open reading frame. During trans-translation Ala-aminoacylated tmRNA acts like a tRNA, entering the A-site of stalled ribosomes, displacing the stalled mRNA. The ribosome then switches to translate the ORF on the tmRNA; the nascent peptide is terminated with the 'tag peptide' encoded by the tmRNA and targeted for degradation. The ribosome is freed to recommence translation, which seems to be the essential function of trans-translation. The sequence is that of SsrA-binding protein from Geotalea uraniireducens (strain Rf4) (Geobacter uraniireducens).